The chain runs to 165 residues: Nucleotide-binding protein Suden_0039 (165 aa).

Belongs to the YajQ family.

Its function is as follows. Nucleotide-binding protein. The polypeptide is Nucleotide-binding protein Suden_0039 (Sulfurimonas denitrificans (strain ATCC 33889 / DSM 1251) (Thiomicrospira denitrificans (strain ATCC 33889 / DSM 1251))).